Here is a 102-residue protein sequence, read N- to C-terminus: Antitoxin VapB46 (102 aa).

This sequence belongs to the phD/YefM antitoxin family.

Functionally, antitoxin component of a type II toxin-antitoxin (TA) system. Neutralizes the effect of cognate toxin VapC46. This chain is Antitoxin VapB46 (vapB46), found in Mycobacterium tuberculosis (strain CDC 1551 / Oshkosh).